The sequence spans 229 residues: MARATLEKKPREVARMFDAVGKKYDLTNTVLTGGIDTLWRKATRKRLDPKPGEKVVDLAAGTGVSTAELSKSGALVVGCDFSLGMLKAGRHRNVPLVAGDGLNLPFADNTFDAATISFGLRNFGDTAAGLREIARVVKPGGRLTVCEFSTPVIPVFSTIYTEYLMRALPTVAKIVSSDPESYVYLAESIRAWPDQETLARIIQSAGWKEVGWRNLTGGIVALHSATKPR.

S-adenosyl-L-methionine is bound by residues T62, D80, 100-101, and S117; that span reads DG.

Belongs to the class I-like SAM-binding methyltransferase superfamily. MenG/UbiE family.

It carries out the reaction a 2-demethylmenaquinol + S-adenosyl-L-methionine = a menaquinol + S-adenosyl-L-homocysteine + H(+). It functions in the pathway quinol/quinone metabolism; menaquinone biosynthesis; menaquinol from 1,4-dihydroxy-2-naphthoate: step 2/2. Functionally, methyltransferase required for the conversion of demethylmenaquinol (DMKH2) to menaquinol (MKH2). The sequence is that of Demethylmenaquinone methyltransferase from Corynebacterium kroppenstedtii (strain DSM 44385 / JCM 11950 / CIP 105744 / CCUG 35717).